The following is a 191-amino-acid chain: Clusterin (191 aa).

N-linked (GlcNAc...) asparagine glycans are attached at residues asparagine 79, asparagine 116, asparagine 142, and asparagine 162. Serine 184 is subject to Phosphoserine.

It belongs to the clusterin family. In terms of assembly, antiparallel disulfide-linked heterodimer of an alpha chain and a beta chain. Self-associates and forms higher oligomers. Interacts with a broad range of misfolded proteins, including APP, APOC2 and LYZ. Slightly acidic pH promotes interaction with misfolded proteins. Forms high-molecular weight oligomers upon interaction with misfolded proteins. Interacts with APOA1, LRP2, CLUAP1 and PON1. Interacts with the complement membrane attack complex. Interacts (via alpha chain) with XRCC6. Interacts with SYVN1, COMMD1, BTRC, CUL1 and with ubiquitin and SCF (SKP1-CUL1-F-box protein) E3 ubiquitin-protein ligase complexes. Interacts (via alpha chain) with BAX in stressed cells, where BAX undergoes a conformation change leading to association with the mitochondrial membrane. Does not interact with BAX in unstressed cells. Found in a complex with LTF, CLU, EPPIN and SEMG1. Interacts (immaturely glycosylated pre-secreted form) with HSPA5; this interaction promotes CLU stability and facilitates stress-induced CLU retrotranslocation from the secretory pathway to the mitochondria, thereby reducing stress-induced apoptosis by stabilizing mitochondrial membrane integrity. Interacts with BCL2L1; this interaction releases and activates BAX and promotes cell death. Interacts with TGFBR2 and ACVR1. Interacts (secreted form) with STMN3; this interaction may act as an important modulator during neuronal differentiation. Proteolytically cleaved on its way through the secretory system, probably within the Golgi lumen. Proteolytic cleavage is not necessary for its chaperone activity. All non-secreted forms are not proteolytically cleaved. Chaperone activity of uncleaved forms is dependent on a non-reducing environment. Post-translationally, polyubiquitinated, leading to proteasomal degradation. Under cellular stress, the intracellular level of cleaved form is reduced due to proteasomal degradation. In terms of processing, heavily N-glycosylated. About 30% of the protein mass is comprised of complex N-linked carbohydrate. Endoplasmic reticulum (ER) stress induces changes in glycosylation status and increases level of hypoglycosylated forms. Core carbohydrates are essential for chaperone activity. Non-secreted forms are hypoglycosylated or unglycosylated.

It localises to the secreted. The protein localises to the nucleus. It is found in the cytoplasm. Its subcellular location is the mitochondrion membrane. The protein resides in the cytosol. It localises to the microsome. The protein localises to the endoplasmic reticulum. It is found in the mitochondrion. Its subcellular location is the perinuclear region. The protein resides in the cytoplasmic vesicle. It localises to the secretory vesicle. The protein localises to the chromaffin granule. Functionally, functions as extracellular chaperone that prevents aggregation of non native proteins. Prevents stress-induced aggregation of blood plasma proteins. Inhibits formation of amyloid fibrils by APP, APOC2, B2M, CALCA, CSN3, SNCA and aggregation-prone LYZ variants (in vitro). Does not require ATP. Maintains partially unfolded proteins in a state appropriate for subsequent refolding by other chaperones, such as HSPA8/HSC70. Does not refold proteins by itself. Binding to cell surface receptors triggers internalization of the chaperone-client complex and subsequent lysosomal or proteasomal degradation. When secreted, protects cells against apoptosis and against cytolysis by complement: inhibits assembly of the complement membrane attack complex (MAC) by preventing polymerization of C9 pore component of the MAC complex. Intracellular forms interact with ubiquitin and SCF (SKP1-CUL1-F-box protein) E3 ubiquitin-protein ligase complexes and promote the ubiquitination and subsequent proteasomal degradation of target proteins. Promotes proteasomal degradation of COMMD1 and IKBKB. Modulates NF-kappa-B transcriptional activity. Following stress, promotes apoptosis. Inhibits apoptosis when associated with the mitochondrial membrane by interference with BAX-dependent release of cytochrome c into the cytoplasm. Plays a role in the regulation of cell proliferation. An intracellular form suppresses stress-induced apoptosis by stabilizing mitochondrial membrane integrity through interaction with HSPA5. Secreted form does not affect caspase or BAX-mediated intrinsic apoptosis and TNF-induced NF-kappa-B-activity. Secreted form act as an important modulator during neuronal differentiation through interaction with STMN3. Plays a role in the clearance of immune complexes that arise during cell injury. The sequence is that of Clusterin from Mesocricetus auratus (Golden hamster).